The chain runs to 138 residues: Small ribosomal subunit protein uS11c (138 aa).

The interval 1–24 (MIKPIPRISSRRNGRIGSRKTGRR) is disordered. The span at 9-24 (SSRRNGRIGSRKTGRR) shows a compositional bias: basic residues.

It belongs to the universal ribosomal protein uS11 family. In terms of assembly, part of the 30S ribosomal subunit.

It is found in the plastid. The protein localises to the chloroplast. This Lemna minor (Common duckweed) protein is Small ribosomal subunit protein uS11c.